A 386-amino-acid chain; its full sequence is MNIHEYQAKQILKRFGISVPEGVIVHSLNEVNDAINKINSKVIVVKAQIHAGGRGKAGGVIVSRTLDEAKTAIKNMLGSTLVTHQTSKDGQKVRKVYLEEGCDIKKEYYISAIVNRKHGQISIIFSTEGGVDIEEVAANSPEKVVTCNIDPIFGFQGFHGRNLCFDSNLSVDQTRKITSIAEKIYKTMLETDASQIEINPLIETSSGDFIALDAKMNFDDNAIYRHPEILELRDYDEEIPEEIEASKHGLSYIKMDGNIGCMVNGAGLAMATMDIIKYYGAEPANFLDVGGGASQQTVTEAFKIILSDNVDGILVNIFGGIMRCDIIANGIIAAIQEIGINVPLVVRLSGTNFELGKKLLDNSKLNIITAHDLSEAAYNIVNIVKK.

Residues lysine 9–glutamate 244 form the ATP-grasp domain. Residues lysine 46, glycine 53–glycine 55, glutamate 99, cysteine 102, and glutamate 107 contribute to the ATP site. Residues asparagine 199 and aspartate 213 each contribute to the Mg(2+) site. Substrate-binding positions include asparagine 264 and glycine 320–methionine 322.

This sequence belongs to the succinate/malate CoA ligase beta subunit family. In terms of assembly, heterotetramer of two alpha and two beta subunits. Requires Mg(2+) as cofactor.

It carries out the reaction succinate + ATP + CoA = succinyl-CoA + ADP + phosphate. It catalyses the reaction GTP + succinate + CoA = succinyl-CoA + GDP + phosphate. It participates in carbohydrate metabolism; tricarboxylic acid cycle; succinate from succinyl-CoA (ligase route): step 1/1. Its function is as follows. Succinyl-CoA synthetase functions in the citric acid cycle (TCA), coupling the hydrolysis of succinyl-CoA to the synthesis of either ATP or GTP and thus represents the only step of substrate-level phosphorylation in the TCA. The beta subunit provides nucleotide specificity of the enzyme and binds the substrate succinate, while the binding sites for coenzyme A and phosphate are found in the alpha subunit. This Ehrlichia ruminantium (strain Welgevonden) protein is Succinate--CoA ligase [ADP-forming] subunit beta.